Consider the following 73-residue polypeptide: Accessory secretory protein Asp5 (73 aa).

A signal peptide spans 1–30; the sequence is MQKLLLILTILLALILITLVISLPRENQQF. Residues 52–72 traverse the membrane as a helical segment; it reads IILLIVSILLFLTLIFYMIQT.

Part of the accessory SecA2/SecY2 protein translocation apparatus required to export cell wall protein GspB.

The protein resides in the cell membrane. Functionally, part of the accessory SecA2/SecY2 system specifically required to export GspB, a serine-rich repeat cell wall protein encoded upstream in the same operon. This chain is Accessory secretory protein Asp5 (asp5), found in Streptococcus gordonii.